A 458-amino-acid polypeptide reads, in one-letter code: tRNA modification GTPase MnmE (458 aa).

Residues R32, E89, and K128 each coordinate (6S)-5-formyl-5,6,7,8-tetrahydrofolate. The TrmE-type G domain maps to 224-381; that stretch reads GVRVVLAGRP…LCQRLKECAG (158 aa). Residue N234 coordinates K(+). GTP is bound by residues 234 to 239, 253 to 259, and 278 to 281; these read NVGKSS, TDVPGTT, and DTAG. S238 contributes to the Mg(2+) binding site. T253, V255, and T258 together coordinate K(+). T259 is a Mg(2+) binding site. A (6S)-5-formyl-5,6,7,8-tetrahydrofolate-binding site is contributed by K458.

Belongs to the TRAFAC class TrmE-Era-EngA-EngB-Septin-like GTPase superfamily. TrmE GTPase family. In terms of assembly, homodimer. Heterotetramer of two MnmE and two MnmG subunits. Requires K(+) as cofactor.

The protein localises to the cytoplasm. Functionally, exhibits a very high intrinsic GTPase hydrolysis rate. Involved in the addition of a carboxymethylaminomethyl (cmnm) group at the wobble position (U34) of certain tRNAs, forming tRNA-cmnm(5)s(2)U34. The chain is tRNA modification GTPase MnmE from Nitrosococcus oceani (strain ATCC 19707 / BCRC 17464 / JCM 30415 / NCIMB 11848 / C-107).